A 178-amino-acid polypeptide reads, in one-letter code: Ribose 1,5-bisphosphate phosphokinase PhnN (178 aa).

9–16 (GPSGSGKD) is an ATP binding site.

Belongs to the ribose 1,5-bisphosphokinase family.

The catalysed reaction is alpha-D-ribose 1,5-bisphosphate + ATP = 5-phospho-alpha-D-ribose 1-diphosphate + ADP. It functions in the pathway metabolic intermediate biosynthesis; 5-phospho-alpha-D-ribose 1-diphosphate biosynthesis; 5-phospho-alpha-D-ribose 1-diphosphate from D-ribose 5-phosphate (route II): step 3/3. Functionally, catalyzes the phosphorylation of ribose 1,5-bisphosphate to 5-phospho-D-ribosyl alpha-1-diphosphate (PRPP). The sequence is that of Ribose 1,5-bisphosphate phosphokinase PhnN from Pantoea vagans (strain C9-1) (Pantoea agglomerans (strain C9-1)).